Here is a 363-residue protein sequence, read N- to C-terminus: Copper-containing nitrite reductase (363 aa).

Positions 1-24 (MSVFRSVLGACVLLGSCASSLALA) are cleaved as a signal peptide. 2 consecutive Plastocyanin-like domains span residues 25-193 (GGAE…YDRV) and 194-363 (YTIG…EPKQ). Residues histidine 113, histidine 118, histidine 153, cysteine 154, histidine 163, methionine 168, and histidine 324 each contribute to the Cu cation site.

This sequence belongs to the multicopper oxidase family. In terms of assembly, homotrimer. Requires Cu(2+) as cofactor. It depends on Cu(+) as a cofactor. The cofactor is FAD.

It localises to the periplasm. The enzyme catalyses nitric oxide + Fe(III)-[cytochrome c] + H2O = Fe(II)-[cytochrome c] + nitrite + 2 H(+). It participates in nitrogen metabolism; nitrate reduction (denitrification); dinitrogen from nitrate: step 2/4. The chain is Copper-containing nitrite reductase (nirK) from Pseudomonas chlororaphis (Pseudomonas aureofaciens).